Here is a 97-residue protein sequence, read N- to C-terminus: MTDLRHYDVIVSPVITEKSTMVSEHNQVVFNVARKATKPEIKAAVEALFGVKVTAVNTAVRKGKVKRFRGLIGRQSDVKKAIVTLAEGQSIDVSTGL.

Belongs to the universal ribosomal protein uL23 family. In terms of assembly, part of the 50S ribosomal subunit. Contacts protein L29, and trigger factor when it is bound to the ribosome.

In terms of biological role, one of the early assembly proteins it binds 23S rRNA. One of the proteins that surrounds the polypeptide exit tunnel on the outside of the ribosome. Forms the main docking site for trigger factor binding to the ribosome. This chain is Large ribosomal subunit protein uL23, found in Brucella anthropi (strain ATCC 49188 / DSM 6882 / CCUG 24695 / JCM 21032 / LMG 3331 / NBRC 15819 / NCTC 12168 / Alc 37) (Ochrobactrum anthropi).